Reading from the N-terminus, the 783-residue chain is MEGAMAVRVTAAHTAEARAEAGREAGEGGVAAAAALSSGGFLGLPAPFSEEDEDDVHRCGRCQVEFTALEDFVQHKIQKTCHRAPQEALPTTPAATALLDQEVVPTAAEGGPDEPITVAHIVVEATSLAEDISHAPDLVGSGHIKEVIVAAEAEPGDVEMAEAPGSPNHQELGLLGEGEQAHVKLLVNKEGRYVCMLCHKTFKTGSILKAHMVTHSSRKDHECKLCGASFRTKGSLIRHHRRHTDERPYKCAKCGKSFRESGALTRHLKSLTPCTEKIRFSISKDTAVGKEEVPAGSSASTVGTVTSSVAGDPMETSPVIHLVTDAKGTVIHEVHVQMQELPLGMKALTPESPDSEELPCSSENSRENLLHQAMQNSGIVLERVAGEESALEPAPPSGSSPQCLGDGSPELPLLKVEQIETQVASEAATVPRTHPCPQCSETFPTAATLEAHKRGHIAPRPFTCTQCGKAFPKAYLLKKHQEVHVHERRFRCGDCGKLYKTIAHVRGHRRVHSDERPFPCPQCGKRYKTKNAQQVHFRTHLEEKPHVCQFCSRGFREKGSLVRHVRHHTGEKPFKCYKCGRGFAEHGTLNRHLRTKGGCLLEVEELLVSEESPSAAATVLAEDPHTVLVEFSSVVADTQEYIIEATADDTETSEATEIIEGTQTEVDSHIMKVVQQIVHQAGAGHQIIVQNVTMDQETALGSEATAADTITIATPESLTEQVAMTLASAISEGTVLTARAGPNSTEQATVTMVSSEDIEILEHGGELVIASPEGQLEVQTVIV.

The interval 40 to 84 (GFLGLPAPFSEEDEDDVHRCGRCQVEFTALEDFVQHKIQKTCHRA) is required for ubiquitin ligase activity. Serine 49 is modified (phosphoserine). A mediates dimerization, DNA-binding, transcription repression of CCNA2 and interaction with HMGA2 region spans residues 185 to 264 (LLVNKEGRYV…GKSFRESGAL (80 aa)). 2 C2H2-type zinc fingers span residues 193–215 (YVCM…MVTH) and 221–243 (HECK…HRRH). The segment at 249 to 273 (YKCAKCGKSFRESGALTRHLKSLTP) adopts a C2H2-type 3; degenerate zinc-finger fold. The tract at residues 368-565 (NLLHQAMQNS…REKGSLVRHV (198 aa)) is mediates interaction with CDKN2A. The interval 386–407 (GEESALEPAPPSGSSPQCLGDG) is disordered. 5 C2H2-type zinc fingers span residues 434-456 (HPCP…KRGH), 462-484 (FTCT…QEVH), 490-512 (FRCG…RRVH), 518-540 (FPCP…FRTH), and 546-568 (HVCQ…VRHH). Residues 434–598 (HPCPQCSETF…LNRHLRTKGG (165 aa)) are interaction with BMI1. The tract at residues 520–579 (CPQCGKRYKTKNAQQVHFRTHLEEKPHVCQFCSRGFREKGSLVRHVRHHTGEKPFKCYKC) is mediates interaction with TP53. Residues 574 to 596 (FKCYKCGRGFAEHGTLNRHLRTK) form a C2H2-type 9; degenerate zinc finger. Residues 574–596 (FKCYKCGRGFAEHGTLNRHLRTK) form a mediates interaction with RASSF1 region.

Homodimer; binds DNA as a dimer. Forms a complex with CDKN2A and TP53. Interacts with HDAC1, HMGA2 and RASSF1. Interactions with TP53, RB1, ANP32A and probably BMI1 and FHL2 regulate E4F1 activity. Phosphorylated; phosphorylation is cell cycle-dependent and regulates DNA-binding activity and function. Post-translationally, may be sumoylated by UBE2I upon interaction with CDKN2A. In terms of tissue distribution, ubiquitously expressed.

The protein resides in the nucleus. Its subcellular location is the nucleoplasm. The protein localises to the cytoplasm. The catalysed reaction is S-ubiquitinyl-[E2 ubiquitin-conjugating enzyme]-L-cysteine + [acceptor protein]-L-lysine = [E2 ubiquitin-conjugating enzyme]-L-cysteine + N(6)-ubiquitinyl-[acceptor protein]-L-lysine.. Its pathway is protein modification; protein ubiquitination. In terms of biological role, may function as a transcriptional repressor. May also function as a ubiquitin ligase mediating ubiquitination of chromatin-associated TP53. Functions in cell survival and proliferation through control of the cell cycle. Functions in the p53 and pRB tumor suppressor pathways and regulates the cyclin CCNA2 transcription. The chain is Transcription factor E4F1 (E4f1) from Mus musculus (Mouse).